Here is a 189-residue protein sequence, read N- to C-terminus: Cancer/testis antigen family 45 member A2 (189 aa).

It belongs to the CT45 family. As to expression, testis specific. Expressed in cancer cell lines.

This Homo sapiens (Human) protein is Cancer/testis antigen family 45 member A2.